Here is a 517-residue protein sequence, read N- to C-terminus: Protein disulfide isomerase-like 1-2 (517 aa).

The N-terminal stretch at M1 to G23 is a signal peptide. The Thioredoxin 1 domain maps to V24–G143. N41 carries N-linked (GlcNAc...) asparagine glycosylation. Active-site nucleophile residues include C61 and C64. An intrachain disulfide couples C61 to C64. A glycan (N-linked (GlcNAc...) asparagine) is linked at N301. A Thioredoxin 2 domain is found at V357–G484. Catalysis depends on nucleophile residues C407 and C410. C407 and C410 are joined by a disulfide. The short motif at K514–L517 is the Prevents secretion from ER element.

The protein belongs to the protein disulfide isomerase family.

Its subcellular location is the endoplasmic reticulum lumen. The catalysed reaction is Catalyzes the rearrangement of -S-S- bonds in proteins.. Functionally, acts as a protein-folding catalyst that interacts with nascent polypeptides to catalyze the formation, isomerization, and reduction or oxidation of disulfide bonds. May play a role in storage protein biogenesis. This chain is Protein disulfide isomerase-like 1-2 (PDIL1-2), found in Oryza sativa subsp. japonica (Rice).